Reading from the N-terminus, the 208-residue chain is Probable nicotinate-nucleotide adenylyltransferase (208 aa).

This sequence belongs to the NadD family.

The enzyme catalyses nicotinate beta-D-ribonucleotide + ATP + H(+) = deamido-NAD(+) + diphosphate. It participates in cofactor biosynthesis; NAD(+) biosynthesis; deamido-NAD(+) from nicotinate D-ribonucleotide: step 1/1. Functionally, catalyzes the reversible adenylation of nicotinate mononucleotide (NaMN) to nicotinic acid adenine dinucleotide (NaAD). This is Probable nicotinate-nucleotide adenylyltransferase from Symbiobacterium thermophilum (strain DSM 24528 / JCM 14929 / IAM 14863 / T).